The primary structure comprises 637 residues: Threonine--tRNA ligase (637 aa).

One can recognise a TGS domain in the interval 1-61 (MLNITLPDCS…VEDSAVQIIT (61 aa)). The interval 242–533 (DHRKLGKQLD…LIENHAGSFP (292 aa)) is catalytic. Zn(2+) is bound by residues C333, H384, and H510.

Belongs to the class-II aminoacyl-tRNA synthetase family. As to quaternary structure, homodimer. Requires Zn(2+) as cofactor.

The protein resides in the cytoplasm. The enzyme catalyses tRNA(Thr) + L-threonine + ATP = L-threonyl-tRNA(Thr) + AMP + diphosphate + H(+). Functionally, catalyzes the attachment of threonine to tRNA(Thr) in a two-step reaction: L-threonine is first activated by ATP to form Thr-AMP and then transferred to the acceptor end of tRNA(Thr). Also edits incorrectly charged L-seryl-tRNA(Thr). This is Threonine--tRNA ligase from Neisseria gonorrhoeae (strain ATCC 700825 / FA 1090).